Here is a 157-residue protein sequence, read N- to C-terminus: Eukaryotic translation initiation factor 5A-1 (157 aa).

At Lys-52 the chain carries Hypusine. Residues Ser-75 and Ser-77 each carry the phosphoserine modification. Phosphothreonine is present on Thr-78.

It belongs to the eIF-5A family. In terms of processing, lys-52 undergoes hypusination, a unique post-translational modification that consists in the addition of a butylamino group from spermidine to lysine side chain, leading to the formation of the unusual amino acid hypusine. eIF-5As are the only known proteins to undergo this modification, which is essential for their function.

It localises to the cytoplasm. Functionally, translation factor that promotes translation elongation and termination, particularly upon ribosome stalling at specific amino acid sequence contexts. Binds between the exit (E) and peptidyl (P) site of the ribosome and promotes rescue of stalled ribosome: specifically required for efficient translation of polyproline-containing peptides as well as other motifs that stall the ribosome. Acts as a ribosome quality control (RQC) cofactor by joining the RQC complex to facilitate peptidyl transfer during CAT tailing step. This Schizosaccharomyces pombe (strain 972 / ATCC 24843) (Fission yeast) protein is Eukaryotic translation initiation factor 5A-1 (tif51a).